Reading from the N-terminus, the 721-residue chain is Polyribonucleotide nucleotidyltransferase (721 aa).

2 residues coordinate Mg(2+): Asp495 and Asp501. The KH domain maps to 562–621; it reads PRLLSFRIDPELIGTVIGPGGRTIKGITERTNTKIDIEDGGIVTIASHDGAAAEAAQRII. Positions 631-699 constitute an S1 motif domain; that stretch reads GEVFSGTITR…NRGRINLTLR (69 aa). The segment at 700-721 is disordered; it reads GVPQNGEETQSEPAPTPVAPLN.

Belongs to the polyribonucleotide nucleotidyltransferase family. Requires Mg(2+) as cofactor.

Its subcellular location is the cytoplasm. It catalyses the reaction RNA(n+1) + phosphate = RNA(n) + a ribonucleoside 5'-diphosphate. Its function is as follows. Involved in mRNA degradation. Catalyzes the phosphorolysis of single-stranded polyribonucleotides processively in the 3'- to 5'-direction. The polypeptide is Polyribonucleotide nucleotidyltransferase (Prochlorococcus marinus (strain MIT 9303)).